Reading from the N-terminus, the 472-residue chain is MTMIRTRFAPSPTGYLHIGGARTALYSWLHTRRHGGRFVLRIEDTDRERSTPEAVNAILEGMAWLGLDYDEGPFYQTERYDRYRQHLQTLLDAGQAYYCYCTKDRLERLRTEQQARKEKPRYDGRCRDLDGPPSEEVADEPVIRFRTPLEGHVVVEDAIRGKVQFLNSELDDLVIARGDGSPTYNFTVVVDDLEMGVTDVIRGDDHLNNTPRQIHLYQALGFEPPRFAHVPMILGEDGKRLSKRHGSVSVLQYRDEGYLPEALLNYLVRLGWSHGDQEVFGVDELIQLFDINEVNHSASTFNPSKLQWLNQQHIMRAEPNHIARHLGPFLAERGVDPAEGPALEAVVRTQQERAKTLVEMADNSLFFYRRPEAYEEKAARKNFKEGTAEILEHCQHCFSGLPSWDAESIHGVVTEAAEAFDVKMGKVAQPLRVAVSGSAVSPPIDATLELLGREETVARVGQAAEWVRQNVG.

The 'HIGH' region signature appears at 10–20 (PSPTGYLHIGG). The Zn(2+) site is built by Cys-99, Cys-101, Cys-126, and Asp-128. Residues 112 to 130 (EQQARKEKPRYDGRCRDLD) are compositionally biased toward basic and acidic residues. The tract at residues 112–137 (EQQARKEKPRYDGRCRDLDGPPSEEV) is disordered. The 'KMSKS' region motif lies at 240-244 (RLSKR). An ATP-binding site is contributed by Lys-243.

This sequence belongs to the class-I aminoacyl-tRNA synthetase family. Glutamate--tRNA ligase type 1 subfamily. Monomer. Zn(2+) serves as cofactor.

It localises to the cytoplasm. It catalyses the reaction tRNA(Glu) + L-glutamate + ATP = L-glutamyl-tRNA(Glu) + AMP + diphosphate. Functionally, catalyzes the attachment of glutamate to tRNA(Glu) in a two-step reaction: glutamate is first activated by ATP to form Glu-AMP and then transferred to the acceptor end of tRNA(Glu). The chain is Glutamate--tRNA ligase 2 from Halorhodospira halophila (strain DSM 244 / SL1) (Ectothiorhodospira halophila (strain DSM 244 / SL1)).